A 320-amino-acid chain; its full sequence is Arabinan endo-1,5-alpha-L-arabinosidase C (320 aa).

The signal sequence occupies residues 1–15; the sequence is MKLALSLFLLSGSLA. Aspartate 31 acts as the Proton acceptor in catalysis. 2 N-linked (GlcNAc...) asparagine glycosylation sites follow: asparagine 126 and asparagine 190. Glutamate 198 functions as the Proton donor in the catalytic mechanism.

Belongs to the glycosyl hydrolase 43 family.

The protein localises to the secreted. The enzyme catalyses Endohydrolysis of (1-&gt;5)-alpha-arabinofuranosidic linkages in (1-&gt;5)-arabinans.. It functions in the pathway glycan metabolism; L-arabinan degradation. In terms of biological role, endo-1,5-alpha-L-arabinanase involved in degradation of pectin. Its preferred substrate is linear 1,5-alpha-L-arabinan. This is Arabinan endo-1,5-alpha-L-arabinosidase C (abnC) from Emericella nidulans (strain FGSC A4 / ATCC 38163 / CBS 112.46 / NRRL 194 / M139) (Aspergillus nidulans).